The following is a 70-amino-acid chain: Cold shock protein CspV (70 aa).

The CSD domain maps to 7-67 (GSVKWFNETK…GKKGPQASNV (61 aa)).

Its subcellular location is the cytoplasm. The protein is Cold shock protein CspV (cspV) of Vibrio cholerae serotype O1 (strain ATCC 39315 / El Tor Inaba N16961).